The following is a 500-amino-acid chain: MSAQPAHLCFRSFVEALKVDNDLVEINTPIDPNLEAAAITRRVCETNDKAPLFNNLIGMKNGLFRILGAPGSLRKSSADRYGRLARHLALPPTASMREILDKMLSASDMPPIPPTIVPTGPCKENSLDDSEFDLTELPVPLIHKSDGGKYIQTYGMHIVQSPDGTWTNWSIARAMVHDKNHLTGLVIPPQHIWQIHQMWKKEGRSDVPWALAFGVPPAAIMASSMPIPDGVTEAGYVGAMTGSSLELVKCDTNDLYVPATSEIVLEGTLSISETGPEGPFGEMHGYIFPGDTHLGAKYKVNRITYRNNAIMPMSSCGRLTDETHTMIGSLAAAEIRKLCQQNDLPITDAFAPFESQVTWVALRVDTEKLRAMKTTSEGFRKRVGDVVFNHKAGYTIHRLVLVGDDIDVYEGKDVLWAFSTRCRPGMDETLFEDVRGFPLIPYMGHGNGPAHRGGKVVSDALMPTEYTTGRNWEAADFNQSYPEDLKQKVLDNWTKMGFSN.

3 residues coordinate Mn(2+): N168, H191, and E233. Prenylated FMN is bound by residues 168-173 (NWSIAR), 190-191 (QH), and E233. E282 functions as the Proton donor in the catalytic mechanism. Residue K391 participates in prenylated FMN binding.

It belongs to the UbiD family. UbiD-like/FDC subfamily. Homodimer. May form higher order oligomers. It depends on Mn(2+) as a cofactor. Requires prenylated FMN as cofactor.

The protein resides in the cytoplasm. The enzyme catalyses (E)-4-coumarate + H(+) = 4-vinylphenol + CO2. It catalyses the reaction (E)-cinnamate + H(+) = styrene + CO2. It carries out the reaction (E)-ferulate + H(+) = 2-methoxy-4-vinylphenol + CO2. Its function is as follows. Catalyzes the reversible decarboxylation of aromatic carboxylic acids like ferulic acid, p-coumaric acid or cinnamic acid, producing the corresponding vinyl derivatives 4-vinylphenol, 4-vinylguaiacol, and styrene, respectively, which play the role of aroma metabolites. The polypeptide is Ferulic acid decarboxylase 1 (Aspergillus niger (strain ATCC MYA-4892 / CBS 513.88 / FGSC A1513)).